The following is a 475-amino-acid chain: tRNA-2-methylthio-N(6)-dimethylallyladenosine synthase (475 aa).

The MTTase N-terminal domain occupies 2–119 (AKLHITTWGC…LPEMINQIRS (118 aa)). [4Fe-4S] cluster contacts are provided by cysteine 11, cysteine 48, cysteine 82, cysteine 156, cysteine 160, and cysteine 163. The Radical SAM core domain maps to 142-374 (KAEGPTAFVS…QQRINHQAMQ (233 aa)). The TRAM domain maps to 377 to 440 (RLMLGTEQRI…SNSLRGEVIR (64 aa)).

It belongs to the methylthiotransferase family. MiaB subfamily. Monomer. [4Fe-4S] cluster serves as cofactor.

The protein localises to the cytoplasm. It catalyses the reaction N(6)-dimethylallyladenosine(37) in tRNA + (sulfur carrier)-SH + AH2 + 2 S-adenosyl-L-methionine = 2-methylsulfanyl-N(6)-dimethylallyladenosine(37) in tRNA + (sulfur carrier)-H + 5'-deoxyadenosine + L-methionine + A + S-adenosyl-L-homocysteine + 2 H(+). Catalyzes the methylthiolation of N6-(dimethylallyl)adenosine (i(6)A), leading to the formation of 2-methylthio-N6-(dimethylallyl)adenosine (ms(2)i(6)A) at position 37 in tRNAs that read codons beginning with uridine. The chain is tRNA-2-methylthio-N(6)-dimethylallyladenosine synthase from Haemophilus ducreyi (strain 35000HP / ATCC 700724).